The following is a 262-amino-acid chain: (2Z,6E)-farnesyl diphosphate synthase (262 aa).

The active site involves aspartate 40. Aspartate 40 serves as a coordination point for Mg(2+). Residues 41–44 (GNRR), tryptophan 45, and 86–88 (STE) each bind substrate. The active-site Proton acceptor is asparagine 89. Residues arginine 92, arginine 211, and 217-219 (RLS) each bind substrate. Glutamate 230 contributes to the Mg(2+) binding site.

It belongs to the UPP synthase family. Z-FPP synthase subfamily. In terms of assembly, homodimer. It depends on Mg(2+) as a cofactor.

Its subcellular location is the cytoplasm. It is found in the cell membrane. The enzyme catalyses isopentenyl diphosphate + (2E)-geranyl diphosphate = (2Z,6E)-farnesyl diphosphate + diphosphate. Its function is as follows. Catalyzes the condensation of only one isopentenyl pyrophosphate (IPP) unit in the cis configuration to E-geranyl diphosphate (E-GPP) generating the 15 carbon product (2Z,6E)-farnesyl diphosphate (Z-FPP or EZ-FPP). Z-FPP is the precursor of decaprenyl diphosphate, which has a central role in the biosynthesis of the mycobacterial cell wall. This Mycobacterium tuberculosis (strain CDC 1551 / Oshkosh) protein is (2Z,6E)-farnesyl diphosphate synthase.